We begin with the raw amino-acid sequence, 620 residues long: Cell fusion protein cfr1 (620 aa).

The region spanning 79–169 is the Fibronectin type-III domain; that stretch reads LPSPPVLKLK…KHITIKTLRM (91 aa). Positions 167–256 constitute a BRCT domain; sequence LRMIDLTGIQ…RLVNVSGFYI (90 aa). Disordered regions lie at residues 287–566 and 588–620; these read QPKN…PEKA and KQSSEPTADDNLIPNKEAEIIQSSDEFESVNID. The span at 303 to 314 shows a compositional bias: polar residues; it reads APQQTTQQGTQN. A compositionally biased stretch (low complexity) spans 315–330; it reads SANAEPSSSASVPAEA. The span at 352 to 375 shows a compositional bias: polar residues; sequence SKPNEAPTSSENIKADQPENSTKQ. A compositionally biased stretch (basic and acidic residues) spans 382–392; it reads MQIKDAEEHSN. The segment covering 393-406 has biased composition (polar residues); that stretch reads LESTPAAQQTSEVE. A compositionally biased stretch (low complexity) spans 424–434; sequence NVNEENNTPET. Residues 445–468 are compositionally biased toward polar residues; that stretch reads NTAAESLINQEETTSGEAVTKSTV. A compositionally biased stretch (acidic residues) spans 472–484; it reads ANEEEAEPNEIIE. Residues 506 to 515 are compositionally biased toward polar residues; that stretch reads NNANSENANG. Positions 517 to 537 are enriched in basic and acidic residues; sequence TDEKIIEAPLDTKENSDDDKP.

Belongs to the CHS5 family.

The protein resides in the golgi apparatus. In terms of biological role, required for cell fusion, independently of fus1. Appears to have a role in transporting proteins that are involved in mating. May act as a scaffold to retain cell fusion proteins in the cisternae of the Golgi. Degraded at the onset of mating and this leads to release of cell fusion proteins. The sequence is that of Cell fusion protein cfr1 (cfr1) from Schizosaccharomyces pombe (strain 972 / ATCC 24843) (Fission yeast).